The following is a 156-amino-acid chain: Small ribosomal subunit protein uS7 (156 aa).

The protein belongs to the universal ribosomal protein uS7 family. Part of the 30S ribosomal subunit. Contacts proteins S9 and S11.

Its function is as follows. One of the primary rRNA binding proteins, it binds directly to 16S rRNA where it nucleates assembly of the head domain of the 30S subunit. Is located at the subunit interface close to the decoding center, probably blocks exit of the E-site tRNA. The chain is Small ribosomal subunit protein uS7 from Desulfitobacterium hafniense (strain Y51).